The following is a 277-amino-acid chain: Outer plastidial membrane protein porin (277 aa).

Belongs to the eukaryotic mitochondrial porin (TC 1.B.8.1) family.

Its subcellular location is the plastid outer membrane. Functionally, forms a channel through the cell membrane that allows diffusion of small hydrophilic molecules. The channel adopts an open conformation at low or zero membrane potential and a closed conformation at potentials above 30-40 mV. The open state has a weak anion selectivity whereas the closed state is cation-selective. In Zea mays (Maize), this protein is Outer plastidial membrane protein porin (POR1).